Consider the following 186-residue polypeptide: Secreted chorismate mutase (186 aa).

An N-terminal signal peptide occupies residues 1–30; that stretch reads MQPTHTLTRLTVIGKLIIASSFFLSLAVQA. The 77-residue stretch at 31-107 folds into the Chorismate mutase domain; it reads QQCGQTAPLI…AAKAIQYRYR (77 aa). C33 and C148 are disulfide-bonded. Residues R43, K54, D63, 99-103, and R127 contribute to the substrate site; that span reads AKAIQ.

In terms of assembly, homodimer.

Its subcellular location is the periplasm. It carries out the reaction chorismate = prephenate. Its pathway is metabolic intermediate biosynthesis; prephenate biosynthesis; prephenate from chorismate: step 1/1. Its function is as follows. Catalyzes the Claisen rearrangement of chorismate to prephenate. May play some role in the pathogenicity. The protein is Secreted chorismate mutase (pheA2) of Yersinia pestis.